Here is a 219-residue protein sequence, read N- to C-terminus: ATP synthase F(0) complex subunit a (219 aa).

Transmembrane regions (helical) follow at residues 4–24 (PTYL…ILFP), 61–81 (WAAL…LGLL), 90–110 (QLSL…IIGM), 124–144 (EGTP…SLFI), 172–192 (FVLL…LFLL), and 194–214 (LLEI…LSLY).

It belongs to the ATPase A chain family. In terms of assembly, component of the ATP synthase complex composed at least of ATP5F1A/subunit alpha, ATP5F1B/subunit beta, ATP5MC1/subunit c (homooctomer), MT-ATP6/subunit a, MT-ATP8/subunit 8, ATP5ME/subunit e, ATP5MF/subunit f, ATP5MG/subunit g, ATP5MK/subunit k, ATP5MJ/subunit j, ATP5F1C/subunit gamma, ATP5F1D/subunit delta, ATP5F1E/subunit epsilon, ATP5PF/subunit F6, ATP5PB/subunit b, ATP5PD/subunit d, ATP5PO/subunit OSCP. ATP synthase complex consists of a soluble F(1) head domain (subunits alpha(3) and beta(3)) - the catalytic core - and a membrane F(0) domain - the membrane proton channel (subunits c, a, 8, e, f, g, k and j). These two domains are linked by a central stalk (subunits gamma, delta, and epsilon) rotating inside the F1 region and a stationary peripheral stalk (subunits F6, b, d, and OSCP). Interacts with DNAJC30; interaction is direct.

Its subcellular location is the mitochondrion inner membrane. It carries out the reaction H(+)(in) = H(+)(out). In terms of biological role, subunit a, of the mitochondrial membrane ATP synthase complex (F(1)F(0) ATP synthase or Complex V) that produces ATP from ADP in the presence of a proton gradient across the membrane which is generated by electron transport complexes of the respiratory chain. ATP synthase complex consist of a soluble F(1) head domain - the catalytic core - and a membrane F(1) domain - the membrane proton channel. These two domains are linked by a central stalk rotating inside the F(1) region and a stationary peripheral stalk. During catalysis, ATP synthesis in the catalytic domain of F(1) is coupled via a rotary mechanism of the central stalk subunits to proton translocation. With the subunit c (ATP5MC1), forms the proton-conducting channel in the F(0) domain, that contains two crucial half-channels (inlet and outlet) that facilitate proton movement from the mitochondrial intermembrane space (IMS) into the matrix. Protons are taken up via the inlet half-channel and released through the outlet half-channel, following a Grotthuss mechanism. The chain is ATP synthase F(0) complex subunit a from Oncorhynchus masou (Cherry salmon).